The primary structure comprises 426 residues: Phosphomethylpyrimidine synthase (426 aa).

Substrate is bound by residues Asn-65, Met-94, Tyr-123, His-162, 184–186, 225–228, and Glu-264; these read SRG and DGLR. His-268 is a Zn(2+) binding site. Substrate is bound at residue Tyr-291. A Zn(2+)-binding site is contributed by His-332. [4Fe-4S] cluster is bound by residues Cys-409, Cys-412, and Cys-416.

The protein belongs to the ThiC family. Requires [4Fe-4S] cluster as cofactor.

It catalyses the reaction 5-amino-1-(5-phospho-beta-D-ribosyl)imidazole + S-adenosyl-L-methionine = 4-amino-2-methyl-5-(phosphooxymethyl)pyrimidine + CO + 5'-deoxyadenosine + formate + L-methionine + 3 H(+). The protein operates within cofactor biosynthesis; thiamine diphosphate biosynthesis. Catalyzes the synthesis of the hydroxymethylpyrimidine phosphate (HMP-P) moiety of thiamine from aminoimidazole ribotide (AIR) in a radical S-adenosyl-L-methionine (SAM)-dependent reaction. The protein is Phosphomethylpyrimidine synthase of Thermodesulfovibrio yellowstonii (strain ATCC 51303 / DSM 11347 / YP87).